The chain runs to 411 residues: ATPase family AAA domain-containing protein 3C (411 aa).

177–184 (GPPGTGKT) contacts ATP.

The protein belongs to the AAA ATPase family.

In Homo sapiens (Human), this protein is ATPase family AAA domain-containing protein 3C (ATAD3C).